The chain runs to 509 residues: DNA nucleotidylexotransferase (509 aa).

The interval 1–24 (MDPPRASHLSPRKKRPRQTGALMA) is disordered. Residues 11 to 17 (PRKKRPR) carry the Nuclear localization signal motif. The 98-residue stretch at 27-124 (PQDIKFQDLV…KPVEMTGKHQ (98 aa)) folds into the BRCT domain. The residue at position 134 (serine 134) is a Phosphoserine. The tract at residues 151–509 (SQYACQRRTT…DYIEPWERNA (359 aa)) is mediates interaction with DNTTIP2. The segment at 258-262 (VGLKT) is involved in DNA binding. Residues 333 to 338 (GFRRGK) and 342 to 345 (HDVD) each bind a 2'-deoxyribonucleoside 5'-triphosphate. Mg(2+)-binding residues include aspartate 343, aspartate 345, and aspartate 433. 448–449 (GW) serves as a coordination point for a 2'-deoxyribonucleoside 5'-triphosphate.

This sequence belongs to the DNA polymerase type-X family. As to quaternary structure, interacts with PRP19 and DNTTIP1. Forms a ternary complex with DNTTIP2 and core histone. Released from this complex by PCNA. Interacts with TRERF1. The cofactor is Mg(2+).

The protein localises to the nucleus. It carries out the reaction DNA(n) + a 2'-deoxyribonucleoside 5'-triphosphate = DNA(n+1) + diphosphate. Its function is as follows. Template-independent DNA polymerase which catalyzes the random addition of deoxynucleoside 5'-triphosphate to the 3'-end of a DNA initiator. One of the in vivo functions of this enzyme is the addition of nucleotides at the junction (N region) of rearranged Ig heavy chain and T-cell receptor gene segments during the maturation of B- and T-cells. This Homo sapiens (Human) protein is DNA nucleotidylexotransferase (DNTT).